A 169-amino-acid chain; its full sequence is Small ribosomal subunit protein uS5 (169 aa).

Positions 15 to 79 (LKDQVVAINR…ESAKKNLVKV (65 aa)) constitute an S5 DRBM domain.

The protein belongs to the universal ribosomal protein uS5 family. As to quaternary structure, part of the 30S ribosomal subunit. Contacts proteins S4 and S8.

Its function is as follows. With S4 and S12 plays an important role in translational accuracy. Located at the back of the 30S subunit body where it stabilizes the conformation of the head with respect to the body. This Koribacter versatilis (strain Ellin345) protein is Small ribosomal subunit protein uS5.